A 119-amino-acid chain; its full sequence is Large ribosomal subunit protein bL20 (119 aa).

It belongs to the bacterial ribosomal protein bL20 family.

Its function is as follows. Binds directly to 23S ribosomal RNA and is necessary for the in vitro assembly process of the 50S ribosomal subunit. It is not involved in the protein synthesizing functions of that subunit. This Xanthomonas oryzae pv. oryzae (strain PXO99A) protein is Large ribosomal subunit protein bL20.